The primary structure comprises 290 residues: Xylanase inhibitor protein 2 (290 aa).

The signal sequence occupies residues methionine 1 to alanine 27. Positions proline 30 to glycine 290 constitute a GH18 domain. A disulfide bridge links cysteine 49 with cysteine 89. Residue asparagine 112 is glycosylated (N-linked (GlcNAc...) asparagine). Cysteine 187 and cysteine 216 form a disulfide bridge. The N-linked (GlcNAc...) asparagine glycan is linked to asparagine 285.

It belongs to the glycosyl hydrolase 18 family. Xylanase inhibitor subfamily. In terms of assembly, binds to fungal GH10 xylanases.

It localises to the secreted. Its function is as follows. Fungal xylanase inhibitor. Possesses competitive inhibiting activity against several fungal endo-1,4-beta-D-xylanases belonging to glycoside hydrolase family 10 (GH10) and family 11 (GH11). May function in plant defense against secreted fungal pathogen xylanases. Is similar to class III chitinases, but does not exhibit chitinase activity. This chain is Xylanase inhibitor protein 2, found in Oryza sativa subsp. japonica (Rice).